Reading from the N-terminus, the 172-residue chain is Nicotinamide-nucleotide adenylyltransferase (172 aa).

It belongs to the archaeal NMN adenylyltransferase family.

The protein resides in the cytoplasm. The catalysed reaction is beta-nicotinamide D-ribonucleotide + ATP + H(+) = diphosphate + NAD(+). The protein operates within cofactor biosynthesis; NAD(+) biosynthesis; NAD(+) from nicotinamide D-ribonucleotide: step 1/1. This chain is Nicotinamide-nucleotide adenylyltransferase, found in Aeropyrum pernix (strain ATCC 700893 / DSM 11879 / JCM 9820 / NBRC 100138 / K1).